The chain runs to 320 residues: Bifunctional protein FolD 2 (320 aa).

NADP(+) contacts are provided by residues 173–175 and Ile242; that span reads GRS.

This sequence belongs to the tetrahydrofolate dehydrogenase/cyclohydrolase family. Homodimer.

It catalyses the reaction (6R)-5,10-methylene-5,6,7,8-tetrahydrofolate + NADP(+) = (6R)-5,10-methenyltetrahydrofolate + NADPH. The enzyme catalyses (6R)-5,10-methenyltetrahydrofolate + H2O = (6R)-10-formyltetrahydrofolate + H(+). It participates in one-carbon metabolism; tetrahydrofolate interconversion. Functionally, catalyzes the oxidation of 5,10-methylenetetrahydrofolate to 5,10-methenyltetrahydrofolate and then the hydrolysis of 5,10-methenyltetrahydrofolate to 10-formyltetrahydrofolate. This chain is Bifunctional protein FolD 2, found in Rubrobacter xylanophilus (strain DSM 9941 / JCM 11954 / NBRC 16129 / PRD-1).